A 345-amino-acid chain; its full sequence is NADPH dehydrogenase (345 aa).

An FMN-binding site is contributed by 23-26; sequence SPMC. Position 28 (Y28) interacts with substrate. FMN-binding residues include A60 and Q102. 164 to 167 lines the substrate pocket; that stretch reads HGAH. FMN-binding positions include R215 and 307–308; that span reads GR.

It belongs to the NADH:flavin oxidoreductase/NADH oxidase family. NamA subfamily. As to quaternary structure, homotetramer. FMN serves as cofactor.

The enzyme catalyses A + NADPH + H(+) = AH2 + NADP(+). Catalyzes the reduction of the double bond of an array of alpha,beta-unsaturated aldehydes and ketones. It also reduces the nitro group of nitroester and nitroaromatic compounds. It could have a role in detoxification processes. In Bacillus cereus (strain G9842), this protein is NADPH dehydrogenase.